The chain runs to 630 residues: Polypeptide N-acetylgalactosaminyltransferase 5 (630 aa).

At 1–20 (MTFSTFTRKMRGRMRSNTCR) the chain is on the cytoplasmic side. The chain crosses the membrane as a helical; Signal-anchor for type II membrane protein span at residues 21 to 38 (IVLLTSLVWVIFDFVLIA). Residues 39 to 630 (RYSDCIGKDG…MESKFKWQAH (592 aa)) are Lumenal-facing. N-linked (GlcNAc...) asparagine glycosylation occurs at Asn166. 5 cysteine pairs are disulfide-bonded: Cys177/Cys410, Cys401/Cys479, Cys513/Cys530, Cys553/Cys568, and Cys594/Cys611. The catalytic subdomain A stretch occupies residues 186–296 (LPTTSIVIVF…EGWLEPLLAR (111 aa)). Substrate-binding residues include Asp227 and Arg257. The Mn(2+) site is built by Asp280 and His282. The interval 356-418 (PLRTPTMAGG…PCSHVGHVFR (63 aa)) is catalytic subdomain B. Trp387 is a binding site for substrate. His415 contacts Mn(2+). Arg418 and Tyr423 together coordinate substrate. Residues 500 to 622 (YYLGEIRNAE…YGKGQQWLME (123 aa)) enclose the Ricin B-type lectin domain.

It belongs to the glycosyltransferase 2 family. GalNAc-T subfamily. Mn(2+) serves as cofactor. As to expression, expressed during oogenesis, in the somatically derived follicle cells that surround the developing oocyte, which are involved in the maturation of the oocyte and construction of the egg shell, as well as playing a role in subsequent embryonic pattern formation. During embryonic stages 9-11, expressed in the primordium of the foregut, midgut and hindgut. Expressed in salivary glands from embryonic stage 12 onwards. During embryonic stages 12-13, expressed in the posterior midgut and hindgut. During embryonic stages 14-17, expressed in the hindgut and the posterior spiracles. Expression is also detected in the epidermis and antennomaxillary complex at embryonic stages 16-17. In third instar larvae, ubiquitously expressed in wing, eye-antennal, leg and haltere imaginal disks.

It is found in the golgi apparatus membrane. The enzyme catalyses L-seryl-[protein] + UDP-N-acetyl-alpha-D-galactosamine = a 3-O-[N-acetyl-alpha-D-galactosaminyl]-L-seryl-[protein] + UDP + H(+). The catalysed reaction is L-threonyl-[protein] + UDP-N-acetyl-alpha-D-galactosamine = a 3-O-[N-acetyl-alpha-D-galactosaminyl]-L-threonyl-[protein] + UDP + H(+). The protein operates within protein modification; protein glycosylation. In terms of biological role, catalyzes the initial reaction in O-linked oligosaccharide biosynthesis, the transfer of an N-acetyl-D-galactosamine residue to a serine or threonine residue on the protein receptor. It can both act as a peptide transferase that transfers GalNAc onto unmodified peptide substrates, and as a glycopeptide transferase that requires the prior addition of a GalNAc on a peptide before adding additional GalNAc moieties. Prefers EA2 as substrate. In the larval midgut, required for O-glycosylation of apical and luminal proteins within copper cells enabling proper gut acidification. This is Polypeptide N-acetylgalactosaminyltransferase 5 from Drosophila melanogaster (Fruit fly).